Consider the following 117-residue polypeptide: Hydrogenase maturation factor HypA (117 aa).

His-2 lines the Ni(2+) pocket. Cys-73, Cys-76, Cys-92, and Cys-95 together coordinate Zn(2+).

This sequence belongs to the HypA/HybF family.

Functionally, involved in the maturation of [NiFe] hydrogenases. Required for nickel insertion into the metal center of the hydrogenase. The polypeptide is Hydrogenase maturation factor HypA (Solidesulfovibrio magneticus (strain ATCC 700980 / DSM 13731 / RS-1) (Desulfovibrio magneticus)).